The sequence spans 378 residues: Chaperone protein DnaJ (378 aa).

In terms of domain architecture, J spans 3–67; the sequence is DFYDTLGVNR…EKRARYDQFG (65 aa). The segment at 132–214 adopts a CR-type zinc-finger fold; the sequence is GQEREIKIPH…CGGQGVKQVR (83 aa). Cys-145, Cys-148, Cys-162, Cys-165, Cys-188, Cys-191, Cys-202, and Cys-205 together coordinate Zn(2+). 4 CXXCXGXG motif repeats span residues 145–152, 162–169, 188–195, and 202–209; these read CDVCRGTG, CSTCGGAG, CPTCSGSG, and CQSCGGQG.

The protein belongs to the DnaJ family. As to quaternary structure, homodimer. The cofactor is Zn(2+).

The protein resides in the cytoplasm. Its function is as follows. Participates actively in the response to hyperosmotic and heat shock by preventing the aggregation of stress-denatured proteins and by disaggregating proteins, also in an autonomous, DnaK-independent fashion. Unfolded proteins bind initially to DnaJ; upon interaction with the DnaJ-bound protein, DnaK hydrolyzes its bound ATP, resulting in the formation of a stable complex. GrpE releases ADP from DnaK; ATP binding to DnaK triggers the release of the substrate protein, thus completing the reaction cycle. Several rounds of ATP-dependent interactions between DnaJ, DnaK and GrpE are required for fully efficient folding. Also involved, together with DnaK and GrpE, in the DNA replication of plasmids through activation of initiation proteins. In Prochlorococcus marinus (strain SARG / CCMP1375 / SS120), this protein is Chaperone protein DnaJ.